The chain runs to 154 residues: MHCPFCRHPDSRVVDSREADEGQAIRRRRSCPECGRRFTTVETAVLAVVKRSGVTEPFSRDKVVKGVRRACQGRDVDDDALNLLAQQVEDAVRAAGSPEIPSNEVGLAILGPLRDLDEVAYLRFASVYRGFSSAEDFEREIAALRAHRDAPAES.

A zinc finger lies at C3–C34. Positions L46 to D136 constitute an ATP-cone domain.

This sequence belongs to the NrdR family. The cofactor is Zn(2+).

In terms of biological role, negatively regulates transcription of bacterial ribonucleotide reductase nrd genes and operons by binding to NrdR-boxes. This is Transcriptional repressor NrdR from Mycobacteroides abscessus (strain ATCC 19977 / DSM 44196 / CCUG 20993 / CIP 104536 / JCM 13569 / NCTC 13031 / TMC 1543 / L948) (Mycobacterium abscessus).